A 347-amino-acid chain; its full sequence is Spermidine/putrescine import ATP-binding protein PotA (347 aa).

In terms of domain architecture, ABC transporter spans 6–238 (LEIRNLSHYY…PKTKFVADFI (233 aa)). 40 to 47 (GPSGCGKT) serves as a coordination point for ATP.

It belongs to the ABC transporter superfamily. Spermidine/putrescine importer (TC 3.A.1.11.1) family. The complex is composed of two ATP-binding proteins (PotA), two transmembrane proteins (PotB and PotC) and a solute-binding protein (PotD).

The protein resides in the cell inner membrane. The catalysed reaction is ATP + H2O + polyamine-[polyamine-binding protein]Side 1 = ADP + phosphate + polyamineSide 2 + [polyamine-binding protein]Side 1.. Part of the ABC transporter complex PotABCD involved in spermidine/putrescine import. Responsible for energy coupling to the transport system. This chain is Spermidine/putrescine import ATP-binding protein PotA, found in Borrelia garinii subsp. bavariensis (strain ATCC BAA-2496 / DSM 23469 / PBi) (Borreliella bavariensis).